The following is a 109-amino-acid chain: Large ribosomal subunit protein uL22 (109 aa).

It belongs to the universal ribosomal protein uL22 family. Part of the 50S ribosomal subunit.

This protein binds specifically to 23S rRNA; its binding is stimulated by other ribosomal proteins, e.g. L4, L17, and L20. It is important during the early stages of 50S assembly. It makes multiple contacts with different domains of the 23S rRNA in the assembled 50S subunit and ribosome. Functionally, the globular domain of the protein is located near the polypeptide exit tunnel on the outside of the subunit, while an extended beta-hairpin is found that lines the wall of the exit tunnel in the center of the 70S ribosome. The protein is Large ribosomal subunit protein uL22 of Methylibium petroleiphilum (strain ATCC BAA-1232 / LMG 22953 / PM1).